We begin with the raw amino-acid sequence, 337 residues long: Formamidase (337 aa).

Positions 14–257 (VVIGLVQLQL…DEIITAEVRP (244 aa)) constitute a CN hydrolase domain. The active-site Proton acceptor is the E60. K129 serves as the catalytic Proton donor. C162 functions as the Nucleophile in the catalytic mechanism.

Belongs to the carbon-nitrogen hydrolase superfamily. Aliphatic amidase family.

The catalysed reaction is formamide + H2O = formate + NH4(+). In terms of biological role, is an aliphatic amidase with a restricted substrate specificity, as it only hydrolyzes formamide. The protein is Formamidase of Bradyrhizobium sp. (strain ORS 278).